Here is a 104-residue protein sequence, read N- to C-terminus: Large ribosomal subunit protein bL27 (104 aa).

A propeptide spanning residues 1–15 (MNNKYFLTKIDLQFF) is cleaved from the precursor.

The protein belongs to the bacterial ribosomal protein bL27 family. The N-terminus is cleaved by ribosomal processing cysteine protease Prp.

This is Large ribosomal subunit protein bL27 from Mycoplasma pneumoniae (strain ATCC 29342 / M129 / Subtype 1) (Mycoplasmoides pneumoniae).